The chain runs to 303 residues: UDP-3-O-acyl-N-acetylglucosamine deacetylase (303 aa).

Positions 78, 237, and 241 each coordinate Zn(2+). The active-site Proton donor is the His-264.

Belongs to the LpxC family. Zn(2+) serves as cofactor.

The enzyme catalyses a UDP-3-O-[(3R)-3-hydroxyacyl]-N-acetyl-alpha-D-glucosamine + H2O = a UDP-3-O-[(3R)-3-hydroxyacyl]-alpha-D-glucosamine + acetate. Its pathway is glycolipid biosynthesis; lipid IV(A) biosynthesis; lipid IV(A) from (3R)-3-hydroxytetradecanoyl-[acyl-carrier-protein] and UDP-N-acetyl-alpha-D-glucosamine: step 2/6. Its function is as follows. Catalyzes the hydrolysis of UDP-3-O-myristoyl-N-acetylglucosamine to form UDP-3-O-myristoylglucosamine and acetate, the committed step in lipid A biosynthesis. The sequence is that of UDP-3-O-acyl-N-acetylglucosamine deacetylase from Coxiella burnetii (strain CbuG_Q212) (Coxiella burnetii (strain Q212)).